Here is a 418-residue protein sequence, read N- to C-terminus: Tyrosine--tRNA ligase (418 aa).

Y34 is an L-tyrosine binding site. The short motif at 39–48 is the 'HIGH' region element; the sequence is PTADSLHLGH. L-tyrosine is bound by residues Y169 and Q173. The short motif at 229-233 is the 'KMSKS' region element; sequence KFGKS. Residue K232 participates in ATP binding. Residues 352 to 418 enclose the S4 RNA-binding domain; that stretch reads LNLVDMLVTA…GKKKYAVLTY (67 aa).

This sequence belongs to the class-I aminoacyl-tRNA synthetase family. TyrS type 1 subfamily. Homodimer.

It is found in the cytoplasm. The enzyme catalyses tRNA(Tyr) + L-tyrosine + ATP = L-tyrosyl-tRNA(Tyr) + AMP + diphosphate + H(+). Functionally, catalyzes the attachment of tyrosine to tRNA(Tyr) in a two-step reaction: tyrosine is first activated by ATP to form Tyr-AMP and then transferred to the acceptor end of tRNA(Tyr). This is Tyrosine--tRNA ligase from Streptococcus pyogenes serotype M5 (strain Manfredo).